The following is a 410-amino-acid chain: Zinc transporter ttm-1 (410 aa).

Low complexity-rich tracts occupy residues 1-13 (MTIS…SIRL) and 35-46 (SVSSSDSGVSAD). The disordered stretch occupies residues 1–94 (MTISMISPSS…GAHKHSHDEK (94 aa)). The Cytoplasmic portion of the chain corresponds to 1–103 (MTISMISPSS…KYQKGRRAEK (103 aa)). Residues 50 to 69 (HHHHGHGHGHSHGGHGHSHT) show a composition bias toward basic residues. The helical transmembrane segment at 104-124 (VLWAVAALSAVFIAAEFVGGF) threads the bilayer. Residues 125-129 (WAQSL) are Extracellular-facing. The helical transmembrane segment at 130 to 150 (AIMTDAGHMLSDLLSFIISIF) threads the bilayer. Topologically, residues 151–171 (AIRCARLPASKRLSFGYERAE) are cytoplasmic. The chain crosses the membrane as a helical span at residues 172-192 (VLGALTSVIILWVLTTVLVVV). The Extracellular portion of the chain corresponds to 193-208 (AIQRIVNNEHEVDADV). The chain crosses the membrane as a helical span at residues 209–229 (MLITAGVGVLFNIVMGLVLHF). Residues 230–258 (GTGGHGHTHGGHSSHGHAHDGKNVNVRAA) lie on the Cytoplasmic side of the membrane. The chain crosses the membrane as a helical span at residues 259–279 (LIHVIGDLVQSIGVLIAALII). Arginine 280 is a topological domain (extracellular). The helical transmembrane segment at 281–301 (FTGWTLADPICTFLFSIIVLF) threads the bilayer. Topologically, residues 302-410 (TTVTVMRDIF…CDTCQQQETA (109 aa)) are cytoplasmic.

The protein belongs to the cation diffusion facilitator (CDF) transporter (TC 2.A.4) family. SLC30A subfamily. Isoform a: Expressed in the hypodermis and the intestine. Isoform b: Expressed in the intestine, head neurons, seam cells, hypodermis, and the vulva.

Its subcellular location is the cytoplasmic vesicle membrane. The protein localises to the apical cell membrane. Its function is as follows. Promotes excretion of zinc from intestinal cells into the intestinal lumen in response to increased dietary zinc. Involved in cadmium resistance, possibly by promoting its transport from cells. Involved in resistance to B.thuringiensis pore-forming toxin Cry5B downstream of the sek-1 and pmk-1 MAPK kinase pathway. This is Zinc transporter ttm-1 from Caenorhabditis elegans.